A 211-amino-acid chain; its full sequence is Ras-related protein Rab-38 (211 aa).

GTP-binding residues include Gly-19, Val-20, Gly-21, Lys-22, Thr-23, Ser-24, Ser-35, Ser-36, Tyr-38, and Thr-41. Thr-23 is a Mg(2+) binding site. The Switch 1 signature appears at 32-46; it reads QNFSSHYRATIGVDF. Mg(2+)-binding residues include Thr-41 and Asp-65. GTP is bound by residues Gly-68, Lys-128, Asp-130, Ala-160, and Lys-161. The Switch 2 motif lies at 68-81; sequence GQERFGNMTRVYYR. The S-palmitoyl cysteine moiety is linked to residue Cys-205. A lipid anchor (S-geranylgeranyl cysteine) is attached at Cys-208.

Belongs to the small GTPase superfamily. Rab family. Interacts with ANKRD27. The cofactor is Mg(2+). In terms of processing, although at least one in vitro system can process and methylate the prenylated C-terminal, in an in vitro system that normally express Rab-38 and in vivo the prenylated C-terminal is not proteolytically processed and not methylated. In terms of tissue distribution, expressed in melanocytes.

It is found in the cell membrane. The protein localises to the melanosome. Its subcellular location is the cytoplasmic vesicle. The protein resides in the phagosome. It localises to the phagosome membrane. It is found in the melanosome membrane. The catalysed reaction is GTP + H2O = GDP + phosphate + H(+). With respect to regulation, regulated by guanine nucleotide exchange factors (GEFs) including the BLOC-3 complex composed of HPS1 and HPS4 which promote the exchange of bound GDP for free GTP. Regulated by GTPase activating proteins (GAPs) including SGSM2 which increase the GTP hydrolysis activity. Inhibited by GDP dissociation inhibitors (GDIs). The small GTPases Rab are key regulators of intracellular membrane trafficking, from the formation of transport vesicles to their fusion with membranes. Rabs cycle between an inactive GDP-bound form and an active GTP-bound form that is able to recruit to membranes different sets of downstream effectors directly responsible for vesicle formation, movement, tethering and fusion. RAB38 may be involved in melanosomal transport and docking. Involved in the proper sorting of TYRP1. Involved in peripheral melanosomal distribution of TYRP1 in melanocytes; the function, which probably is implicating vesicle-trafficking, includes cooperation with ANKRD27 and VAMP7. Plays a role in the maturation of phagosomes that engulf pathogens, such as S.aureus and M.tuberculosis. Plays an important role in the control of melanin production and melanosome biogenesis. In concert with RAB32, regulates the proper trafficking of melanogenic enzymes TYR, TYRP1 and DCT/TYRP2 to melanosomes in melanocytes. The protein is Ras-related protein Rab-38 of Homo sapiens (Human).